Reading from the N-terminus, the 648-residue chain is Threonine--tRNA ligase (648 aa).

Positions 1-61 (MIKITLPDGS…TTDGSLVLYT (61 aa)) constitute a TGS domain. A catalytic region spans residues 240 to 539 (DHRKLGKELE…LLEHTAGNFP (300 aa)). Zn(2+) contacts are provided by cysteine 335, histidine 386, and histidine 516.

Belongs to the class-II aminoacyl-tRNA synthetase family. Homodimer. It depends on Zn(2+) as a cofactor.

The protein localises to the cytoplasm. It catalyses the reaction tRNA(Thr) + L-threonine + ATP = L-threonyl-tRNA(Thr) + AMP + diphosphate + H(+). Its function is as follows. Catalyzes the attachment of threonine to tRNA(Thr) in a two-step reaction: L-threonine is first activated by ATP to form Thr-AMP and then transferred to the acceptor end of tRNA(Thr). Also edits incorrectly charged L-seryl-tRNA(Thr). The chain is Threonine--tRNA ligase from Flavobacterium psychrophilum (strain ATCC 49511 / DSM 21280 / CIP 103535 / JIP02/86).